Here is a 462-residue protein sequence, read N- to C-terminus: Argininosuccinate lyase (462 aa).

The protein belongs to the lyase 1 family. Argininosuccinate lyase subfamily.

Its subcellular location is the cytoplasm. The enzyme catalyses 2-(N(omega)-L-arginino)succinate = fumarate + L-arginine. Its pathway is amino-acid biosynthesis; L-arginine biosynthesis; L-arginine from L-ornithine and carbamoyl phosphate: step 3/3. This chain is Argininosuccinate lyase, found in Rippkaea orientalis (strain PCC 8801 / RF-1) (Cyanothece sp. (strain PCC 8801)).